Reading from the N-terminus, the 122-residue chain is NLFQFTKMINGKLGAFAVLNYISTGCYCGWGGQGTPKDATDRCCFVHDCCYGRVKGCNPKLAIYSYSFQKGNIVCGKNNGCLRDICECDRVAANCFHQNKNTYNRNYRFLSSSRCRQTSEQC.

Cystine bridges form between Cys-26-Cys-115, Cys-28-Cys-44, Cys-43-Cys-95, Cys-49-Cys-122, Cys-50-Cys-88, Cys-57-Cys-81, and Cys-75-Cys-86. Tyr-27, Gly-29, and Gly-31 together coordinate Ca(2+). Residue His-47 is part of the active site. Asp-48 provides a ligand contact to Ca(2+). The active site involves Asp-89.

Belongs to the phospholipase A2 family. Group I subfamily. D49 sub-subfamily. As to quaternary structure, heterodimer of an acidic subunit (CbIalpha or CbIbeta) and a basic subunit (CbII). The acidic subunit is non-toxic, and increases the toxicity of the basic subunit. The cofactor is Ca(2+). As to expression, expressed by the venom gland.

Its subcellular location is the secreted. It carries out the reaction a 1,2-diacyl-sn-glycero-3-phosphocholine + H2O = a 1-acyl-sn-glycero-3-phosphocholine + a fatty acid + H(+). Heterodimer: presynaptic neurotoxin. Functionally, monomer: Snake venom phospholipase A2 (PLA2) that exhibits strong anticoagulant effects by binding to factor Xa (F10) and inhibiting the prothrombinase activity (IC(50) is 20 nM). PLA2 catalyzes the calcium-dependent hydrolysis of the 2-acyl groups in 3-sn-phosphoglycerides. This Pseudocerastes fieldi (Field's horned viper) protein is Basic phospholipase A2 CbII.